The primary structure comprises 113 residues: Hydrogenase maturation factor HypA (113 aa).

Ni(2+) is bound at residue His2. Positions 73, 76, 89, and 92 each coordinate Zn(2+).

It belongs to the HypA/HybF family.

Functionally, involved in the maturation of [NiFe] hydrogenases. Required for nickel insertion into the metal center of the hydrogenase. This Alkalilimnicola ehrlichii (strain ATCC BAA-1101 / DSM 17681 / MLHE-1) protein is Hydrogenase maturation factor HypA.